Reading from the N-terminus, the 247-residue chain is MNITPCSIKTLKGLYDISGVEVGQHFYWQIGGFQIHAQVLITSWVVITILLGSVIIAVRNPQTIPTDGQNFFEYVLEFIRDLSKTQIGEEYGPWVPFIGTMFLFIFVSNWSGALLPWKIIELPHGELAAPTNDINTTVALALLTSAAYFYAGLSKKGLSYFEKYIKPTPILLPINILEDFTKPLSLSFRLFGNILADELVVVVLVSLVPLVVPIPVMFLGLFTSGIQALIFATLAAAYIGESMEGHH.

The next 5 membrane-spanning stretches (helical) occupy residues 38 to 58 (QVLI…IIAV), 95 to 115 (VPFI…GALL), 134 to 154 (INTT…AGLS), 199 to 219 (LVVV…VMFL), and 220 to 240 (GLFT…AYIG).

This sequence belongs to the ATPase A chain family. As to quaternary structure, F-type ATPases have 2 components, CF(1) - the catalytic core - and CF(0) - the membrane proton channel. CF(1) has five subunits: alpha(3), beta(3), gamma(1), delta(1), epsilon(1). CF(0) has four main subunits: a, b, b' and c.

It is found in the plastid. The protein resides in the chloroplast thylakoid membrane. Key component of the proton channel; it plays a direct role in the translocation of protons across the membrane. This Zea mays (Maize) protein is ATP synthase subunit a, chloroplastic.